Consider the following 126-residue polypeptide: Ribosome-binding factor A (126 aa).

The protein belongs to the RbfA family. Monomer. Binds 30S ribosomal subunits, but not 50S ribosomal subunits or 70S ribosomes.

It localises to the cytoplasm. One of several proteins that assist in the late maturation steps of the functional core of the 30S ribosomal subunit. Associates with free 30S ribosomal subunits (but not with 30S subunits that are part of 70S ribosomes or polysomes). Required for efficient processing of 16S rRNA. May interact with the 5'-terminal helix region of 16S rRNA. The protein is Ribosome-binding factor A of Thermosynechococcus vestitus (strain NIES-2133 / IAM M-273 / BP-1).